The sequence spans 140 residues: RxLR effector protein CRE9 (140 aa).

Residues 1–24 form the signal peptide; that stretch reads MRTSVFVALVVATFVATCISFTSA. The RxLR-dEER motif lies at 43–61; it reads RTLAEADDWWLASTNTEER. A helical membrane pass occupies residues 119-139; the sequence is LKILYGALLAGLIIVGVEAML.

It belongs to the RxLR effector family.

Its subcellular location is the secreted. It is found in the host cell. The protein resides in the membrane. Functionally, effector that is involved in host plant infection. Contributes to virulence during the early infection stage, by inhibiting plant defense responses induced by both PAMP-triggered immunity (PTI) and effector-triggered immunity (ETI). This is RxLR effector protein CRE9 from Phytophthora infestans (strain T30-4) (Potato late blight agent).